Consider the following 120-residue polypeptide: MVKLTSIAAGVAAIAAGASATTTLAQSDERVNLVELGVYVSDIRAHLAQYYMFQAAHPTETYPVEVAEAVFNYGDFTTMLTGISPDQVTRMITGVPWYSTRLKPAISKALSKDGIYTIAN.

The chain crosses the membrane as a helical span at residues 7–25 (IAAGVAAIAAGASATTTLA).

The protein belongs to the SRP1/TIP1 family. Seripauperin subfamily.

Its subcellular location is the membrane. This chain is Seripauperin-20 (PAU20), found in Saccharomyces cerevisiae (strain ATCC 204508 / S288c) (Baker's yeast).